The primary structure comprises 709 residues: Elongation factor G (709 aa).

A tr-type G domain is found at 8 to 290 (NRYRNIGISA…AVIQYMPAPQ (283 aa)). Residues 17-24 (AHIDAGKT), 88-92 (DTPGH), and 142-145 (NKMD) each bind GTP.

This sequence belongs to the TRAFAC class translation factor GTPase superfamily. Classic translation factor GTPase family. EF-G/EF-2 subfamily.

It localises to the cytoplasm. Its function is as follows. Catalyzes the GTP-dependent ribosomal translocation step during translation elongation. During this step, the ribosome changes from the pre-translocational (PRE) to the post-translocational (POST) state as the newly formed A-site-bound peptidyl-tRNA and P-site-bound deacylated tRNA move to the P and E sites, respectively. Catalyzes the coordinated movement of the two tRNA molecules, the mRNA and conformational changes in the ribosome. In Psychrobacter sp. (strain PRwf-1), this protein is Elongation factor G.